The primary structure comprises 402 residues: Probable sugar efflux transporter (402 aa).

12 helical membrane-spanning segments follow: residues 15 to 35, 51 to 71, 84 to 104, 109 to 129, 137 to 157, 168 to 188, 209 to 229, 245 to 265, 276 to 296, 297 to 317, 333 to 353, and 365 to 385; these read VLIM…PVAM, GLMM…AMLA, LFII…FWIL, MCIA…VMRI, QALG…LPIG, VTFG…IRLL, PLLL…FTAY, NFAT…SLLF, FIVV…FSTE, AIIA…CIGL, VATA…ALFG, and IGYT…TTHL.

It belongs to the major facilitator superfamily. SotB (TC 2.A.1.2) family.

The protein localises to the cell inner membrane. Involved in the efflux of sugars. The physiological role may be the reduction of the intracellular concentration of toxic sugars or sugar metabolites. The polypeptide is Probable sugar efflux transporter (Haemophilus influenzae (strain 86-028NP)).